The following is a 251-amino-acid chain: uncharacterized protein (251 aa).

N-linked (GlcNAc...) asparagine; by host glycans are attached at residues Asn-149, Asn-152, and Asn-207. Residues 226-246 (YLIFIIIIIIFIILILLWIKY) form a helical membrane-spanning segment.

Belongs to the glycosyltransferase 32 family.

The protein resides in the membrane. This is an uncharacterized protein from Acanthamoeba polyphaga (Amoeba).